We begin with the raw amino-acid sequence, 62 residues long: Large ribosomal subunit protein bL28 (62 aa).

This sequence belongs to the bacterial ribosomal protein bL28 family.

The sequence is that of Large ribosomal subunit protein bL28 from Desulforamulus reducens (strain ATCC BAA-1160 / DSM 100696 / MI-1) (Desulfotomaculum reducens).